The chain runs to 393 residues: NAD(P)H-quinone oxidoreductase subunit H, chloroplastic (393 aa).

This sequence belongs to the complex I 49 kDa subunit family. As to quaternary structure, NDH is composed of at least 16 different subunits, 5 of which are encoded in the nucleus.

It localises to the plastid. The protein resides in the chloroplast thylakoid membrane. It carries out the reaction a plastoquinone + NADH + (n+1) H(+)(in) = a plastoquinol + NAD(+) + n H(+)(out). The enzyme catalyses a plastoquinone + NADPH + (n+1) H(+)(in) = a plastoquinol + NADP(+) + n H(+)(out). Its function is as follows. NDH shuttles electrons from NAD(P)H:plastoquinone, via FMN and iron-sulfur (Fe-S) centers, to quinones in the photosynthetic chain and possibly in a chloroplast respiratory chain. The immediate electron acceptor for the enzyme in this species is believed to be plastoquinone. Couples the redox reaction to proton translocation, and thus conserves the redox energy in a proton gradient. The chain is NAD(P)H-quinone oxidoreductase subunit H, chloroplastic from Trifolium subterraneum (Subterranean clover).